The chain runs to 429 residues: Antho-RFamide neuropeptides type 2 (429 aa).

The N-terminal stretch at 1-22 is a signal peptide; sequence MTTVSYVTILLTVLVQVLTSDA. The propeptide occupies 23 to 233; the sequence is KATNNKRELS…EFQGRFGRED (211 aa). Basic and acidic residues predominate over residues 230–371; the sequence is GREDQGRFGR…EDIAKEDQGR (142 aa). Residues 230 to 429 are disordered; it reads GREDQGRFGR…KSDDALAKIS (200 aa). Pyrrolidone carboxylic acid is present on Gln-234. Phenylalanine amide is present on Phe-237. A propeptide spanning residues 239–241 is cleaved from the precursor; that stretch reads RED. Pyrrolidone carboxylic acid is present on Gln-242. Phe-245 bears the Phenylalanine amide mark. The propeptide occupies 247-249; it reads RED. Pyrrolidone carboxylic acid is present on Gln-250. A Phenylalanine amide modification is found at Phe-253. Positions 255 to 257 are excised as a propeptide; the sequence is RED. At Gln-258 the chain carries Pyrrolidone carboxylic acid. Residue Phe-261 is modified to Phenylalanine amide. The propeptide occupies 263 to 265; that stretch reads RED. Residue Gln-266 is modified to Pyrrolidone carboxylic acid. At Phe-269 the chain carries Phenylalanine amide. A propeptide spanning residues 271–273 is cleaved from the precursor; the sequence is RED. Position 274 is a pyrrolidone carboxylic acid (Gln-274). Phe-277 is subject to Phenylalanine amide. A propeptide spanning residues 279 to 289 is cleaved from the precursor; it reads RELQGRFGRED. Gln-290 is modified (pyrrolidone carboxylic acid). The residue at position 293 (Phe-293) is a Phenylalanine amide. Positions 295 to 297 are excised as a propeptide; the sequence is RED. Pyrrolidone carboxylic acid is present on Gln-298. Phe-301 carries the post-translational modification Phenylalanine amide. A propeptide spanning residues 303 to 305 is cleaved from the precursor; sequence RED. A Pyrrolidone carboxylic acid modification is found at Gln-306. Position 309 is a phenylalanine amide (Phe-309). A propeptide spanning residues 311–321 is cleaved from the precursor; it reads RELQGRFGRED. Gln-322 is subject to Pyrrolidone carboxylic acid. Phe-325 carries the post-translational modification Phenylalanine amide. Positions 327-329 are excised as a propeptide; it reads RED. Pyrrolidone carboxylic acid is present on Gln-330. At Phe-333 the chain carries Phenylalanine amide. A propeptide spanning residues 335 to 342 is cleaved from the precursor; sequence REDLAKED. Gln-343 carries the pyrrolidone carboxylic acid modification. Phenylalanine amide is present on Phe-346. Positions 348 to 355 are excised as a propeptide; that stretch reads REDLAKED. Pyrrolidone carboxylic acid is present on Gln-356. Phe-359 carries the phenylalanine amide modification. The propeptide occupies 361-368; it reads REDIAKED. The residue at position 369 (Gln-369) is a Pyrrolidone carboxylic acid. At Phe-372 the chain carries Phenylalanine amide. The propeptide occupies 374-429; sequence RNAAAAAKKRTIDVIDIESDPKPQTRFRDGKDMQEKRKVEKKDKIEKSDDALAKIS. Residues 392–429 show a composition bias toward basic and acidic residues; the sequence is SDPKPQTRFRDGKDMQEKRKVEKKDKIEKSDDALAKIS.

It belongs to the FARP (FMRFamide related peptide) family.

It is found in the secreted. Its function is as follows. Not known but it could act as a transmitter at neuromuscular synapses. In Anthopleura elegantissima (Green aggregating anemone), this protein is Antho-RFamide neuropeptides type 2.